We begin with the raw amino-acid sequence, 392 residues long: Lipase (392 aa).

A signal peptide spans 1 to 26 (MVSFISISQGVSLCLLVSSMMLGSSA). The propeptide occupies 27–95 (VPVSGKSGSS…GGNLTSIGKR (69 aa)). Residues 50–69 (PLISSRCAPPSNKGSKSDLQ) are disordered. Intrachain disulfides connect C152/C391, C163/C166, and C358/C367. The Nucleophile role is filled by S268. D327 serves as the catalytic Charge relay system. D379 is a binding site for Ca(2+). The active-site Charge relay system is H380.

This sequence belongs to the AB hydrolase superfamily. Lipase family.

It is found in the secreted. It localises to the extracellular space. It catalyses the reaction a triacylglycerol + H2O = a diacylglycerol + a fatty acid + H(+). Lipase activity is maximal at a lipid-water interface (interfacial activation), probably by an induced conformational change that results in an increased accessibility of the active site to the substrate. In terms of biological role, hydrolyzes ester bonds of triglycerides as well as of their derived partial glycerides with a strong 1,3-positional specificity. In Rhizopus niveus, this protein is Lipase.